The sequence spans 202 residues: NADH-quinone oxidoreductase subunit B (202 aa).

Residues 1-13 (MSSPTTKFSNAAS) are compositionally biased toward polar residues. Positions 1-32 (MSSPTTKFSNAASSAGGPRVTPAAASILDPRT) are disordered. [4Fe-4S] cluster contacts are provided by Cys-81, Cys-82, Cys-146, and Cys-176.

The protein belongs to the complex I 20 kDa subunit family. NDH-1 is composed of 14 different subunits. Subunits NuoB, C, D, E, F, and G constitute the peripheral sector of the complex. Requires [4Fe-4S] cluster as cofactor.

Its subcellular location is the cell inner membrane. It carries out the reaction a quinone + NADH + 5 H(+)(in) = a quinol + NAD(+) + 4 H(+)(out). Its function is as follows. NDH-1 shuttles electrons from NADH, via FMN and iron-sulfur (Fe-S) centers, to quinones in the respiratory chain. The immediate electron acceptor for the enzyme in this species is believed to be ubiquinone. Couples the redox reaction to proton translocation (for every two electrons transferred, four hydrogen ions are translocated across the cytoplasmic membrane), and thus conserves the redox energy in a proton gradient. In Nitrobacter hamburgensis (strain DSM 10229 / NCIMB 13809 / X14), this protein is NADH-quinone oxidoreductase subunit B.